The primary structure comprises 287 residues: MSAKIIDGKQVAQTIRNQVAAQVQQRLAQGKRAPGLAVILVGVDPASQVYVGSKRRACEEVGFISRSYDLSATASQEELLALIDRLNDDADVDGILVQLPLPAHCDTTQVLERIRPDKDVDGFHPYNVGRLAQRIPALRPCTPKGIMTLIETTGVKTHGLHAVVVGASNIVGRPMTLELLLAGCTTTTCHRFTQDLEQQVRRADLLVVAVGKPNFIPGEWVKPGALVIDVGINRLADGSLVGDVEFETARNHASFITPVPGGVGPMTVASLMENTLSACQDYHDQAL.

NADP(+)-binding positions include 166 to 168 (GAS) and Ile-232.

The protein belongs to the tetrahydrofolate dehydrogenase/cyclohydrolase family. Homodimer.

It carries out the reaction (6R)-5,10-methylene-5,6,7,8-tetrahydrofolate + NADP(+) = (6R)-5,10-methenyltetrahydrofolate + NADPH. It catalyses the reaction (6R)-5,10-methenyltetrahydrofolate + H2O = (6R)-10-formyltetrahydrofolate + H(+). Its pathway is one-carbon metabolism; tetrahydrofolate interconversion. In terms of biological role, catalyzes the oxidation of 5,10-methylenetetrahydrofolate to 5,10-methenyltetrahydrofolate and then the hydrolysis of 5,10-methenyltetrahydrofolate to 10-formyltetrahydrofolate. The polypeptide is Bifunctional protein FolD (Aeromonas salmonicida (strain A449)).